We begin with the raw amino-acid sequence, 188 residues long: MAKSTTFFISLTLPFLLLSVVTATYYQSMSPTVLGFQEEKFTHLHFYFHDVVTGPKPSMVIVAEPNGKAKNSLPFGTVVAMDDPLTVGPESDSKLVGKAQGIYTSISQEEMGLMMVMTMAFSDGEFNGSTLSILARNMIMSEPVREMAIVGGTGAFRFARGYAQAKFYSVDFTKGDAIVEYDIFVFHY.

An N-terminal signal peptide occupies residues 1-23 (MAKSTTFFISLTLPFLLLSVVTA). Asparagine 127 carries an N-linked (GlcNAc...) asparagine glycan.

The protein belongs to the plant dirigent protein family. As to quaternary structure, homodimer.

It localises to the secreted. Its subcellular location is the extracellular space. The protein resides in the apoplast. The catalysed reaction is a (4R)-4,2'-dihydroxyisoflavan = a pterocarpan + H2O.. It carries out the reaction (3R,4R)-7,2'-dihydroxy-4'-methoxyisoflavanol = (-)-medicarpin + H2O. The enzyme catalyses (3S,4R)-7,2'-dihydroxy-4'-methoxyisoflavanol = (+)-medicarpin + H2O. It catalyses the reaction (3R,4R)-3-(6-hydroxy-1,3-benzodioxol-5-yl)-3,4-dihydro-2H-chromene-4,7-diol = (-)-maackiain + H2O. The catalysed reaction is (3R,4R)-7,2',4'-trihydroxyisoflavanol = (6aR,11aR)-3,9-dihydroxypterocarpan + H2O. In terms of biological role, involved in pterocarpan phytoalexin biosynthesis. Catalyzes the last step in the biosynthesis of the phytoalexin medicarpin, and thereby contributes to plant defense reactions. Dirigent proteins impart stereoselectivity on the phenoxy radical-coupling reaction, yielding optically active lignans from two molecules of coniferyl alcohol in the biosynthesis of lignans, flavonolignans, and alkaloids and thus plays a central role in plant secondary metabolism. The protein is Pterocarpan synthase 1 of Glycyrrhiza echinata (Licorice).